A 224-amino-acid polypeptide reads, in one-letter code: 7-cyano-7-deazaguanine synthase (224 aa).

Residue L12–T22 coordinates ATP. Residues C193, C201, C204, and C207 each contribute to the Zn(2+) site.

This sequence belongs to the QueC family. Requires Zn(2+) as cofactor.

It carries out the reaction 7-carboxy-7-deazaguanine + NH4(+) + ATP = 7-cyano-7-deazaguanine + ADP + phosphate + H2O + H(+). It participates in purine metabolism; 7-cyano-7-deazaguanine biosynthesis. Its function is as follows. Catalyzes the ATP-dependent conversion of 7-carboxy-7-deazaguanine (CDG) to 7-cyano-7-deazaguanine (preQ(0)). The protein is 7-cyano-7-deazaguanine synthase of Prochlorococcus marinus subsp. pastoris (strain CCMP1986 / NIES-2087 / MED4).